Reading from the N-terminus, the 248-residue chain is Adenosylcobinamide-GDP ribazoletransferase (248 aa).

The next 5 membrane-spanning stretches (helical) occupy residues 30 to 50 (LAESFSFFPLVGLILGFCYAL), 54 to 74 (VLSGVVPSLLLAVAITALTAV), 112 to 132 (FGALAIALAVAFKVAALDAVI), 134 to 154 (AGSFLPLLLVPVVSRLAMVLA), and 188 to 208 (AVSAFLVQPVFGLCALVLAAG).

It belongs to the CobS family. Requires Mg(2+) as cofactor.

The protein localises to the cell inner membrane. The catalysed reaction is alpha-ribazole + adenosylcob(III)inamide-GDP = adenosylcob(III)alamin + GMP + H(+). It carries out the reaction alpha-ribazole 5'-phosphate + adenosylcob(III)inamide-GDP = adenosylcob(III)alamin 5'-phosphate + GMP + H(+). The protein operates within cofactor biosynthesis; adenosylcobalamin biosynthesis; adenosylcobalamin from cob(II)yrinate a,c-diamide: step 7/7. Functionally, joins adenosylcobinamide-GDP and alpha-ribazole to generate adenosylcobalamin (Ado-cobalamin). Also synthesizes adenosylcobalamin 5'-phosphate from adenosylcobinamide-GDP and alpha-ribazole 5'-phosphate. This is Adenosylcobinamide-GDP ribazoletransferase from Syntrophobacter fumaroxidans (strain DSM 10017 / MPOB).